The following is a 314-amino-acid chain: 3'-5' exoribonuclease YhaM (314 aa).

The OB DNA-binding region spans 14–90 (VDLYLLIKSS…QLKLRNIRPA (77 aa)). The HD domain maps to 163–279 (HVVSMLNLAK…LHYIDNLDAK (117 aa)).

Belongs to the YhaM family.

Its function is as follows. Shows a 3'-5' exoribonuclease activity. The polypeptide is 3'-5' exoribonuclease YhaM (Bacillus licheniformis (strain ATCC 14580 / DSM 13 / JCM 2505 / CCUG 7422 / NBRC 12200 / NCIMB 9375 / NCTC 10341 / NRRL NRS-1264 / Gibson 46)).